Here is a 120-residue protein sequence, read N- to C-terminus: Large ribosomal subunit protein bL20 (120 aa).

It belongs to the bacterial ribosomal protein bL20 family.

Binds directly to 23S ribosomal RNA and is necessary for the in vitro assembly process of the 50S ribosomal subunit. It is not involved in the protein synthesizing functions of that subunit. The polypeptide is Large ribosomal subunit protein bL20 (Paracidovorax citrulli (strain AAC00-1) (Acidovorax citrulli)).